Reading from the N-terminus, the 121-residue chain is Small ribosomal subunit protein uS10 (121 aa).

Positions 1–20 (MTEQKAKSSKTSSEEAKKQK) are disordered.

It belongs to the universal ribosomal protein uS10 family. As to quaternary structure, part of the 30S ribosomal subunit.

Involved in the binding of tRNA to the ribosomes. This chain is Small ribosomal subunit protein uS10, found in Mycoplasmoides gallisepticum (strain R(low / passage 15 / clone 2)) (Mycoplasma gallisepticum).